Reading from the N-terminus, the 246-residue chain is Enolase-phosphatase E1 (246 aa).

2 residues coordinate Mg(2+): D15 and E17. Residues 134 to 135 and K174 each bind substrate; that span reads SS. Mg(2+) is bound at residue D201.

The protein belongs to the HAD-like hydrolase superfamily. MasA/MtnC family. Monomer. Requires Mg(2+) as cofactor.

Its subcellular location is the cytoplasm. It localises to the nucleus. The catalysed reaction is 5-methylsulfanyl-2,3-dioxopentyl phosphate + H2O = 1,2-dihydroxy-5-(methylsulfanyl)pent-1-en-3-one + phosphate. It participates in amino-acid biosynthesis; L-methionine biosynthesis via salvage pathway; L-methionine from S-methyl-5-thio-alpha-D-ribose 1-phosphate: step 3/6. Its pathway is amino-acid biosynthesis; L-methionine biosynthesis via salvage pathway; L-methionine from S-methyl-5-thio-alpha-D-ribose 1-phosphate: step 4/6. Bifunctional enzyme that catalyzes the enolization of 2,3-diketo-5-methylthiopentyl-1-phosphate (DK-MTP-1-P) into the intermediate 2-hydroxy-3-keto-5-methylthiopentenyl-1-phosphate (HK-MTPenyl-1-P), which is then dephosphorylated to form the acireductone 1,2-dihydroxy-3-keto-5-methylthiopentene (DHK-MTPene). The polypeptide is Enolase-phosphatase E1 (Debaryomyces hansenii (strain ATCC 36239 / CBS 767 / BCRC 21394 / JCM 1990 / NBRC 0083 / IGC 2968) (Yeast)).